The primary structure comprises 432 residues: Glutamate-1-semialdehyde 2,1-aminomutase 2 (432 aa).

An N6-(pyridoxal phosphate)lysine modification is found at Lys-268.

It belongs to the class-III pyridoxal-phosphate-dependent aminotransferase family. HemL subfamily. Homodimer. Requires pyridoxal 5'-phosphate as cofactor.

The protein localises to the cytoplasm. The enzyme catalyses (S)-4-amino-5-oxopentanoate = 5-aminolevulinate. It participates in porphyrin-containing compound metabolism; protoporphyrin-IX biosynthesis; 5-aminolevulinate from L-glutamyl-tRNA(Glu): step 2/2. The polypeptide is Glutamate-1-semialdehyde 2,1-aminomutase 2 (Listeria welshimeri serovar 6b (strain ATCC 35897 / DSM 20650 / CCUG 15529 / CIP 8149 / NCTC 11857 / SLCC 5334 / V8)).